The primary structure comprises 147 residues: Basic phospholipase A2 beta-bungarotoxin A1 chain (147 aa).

A signal peptide spans 1 to 19; the sequence is MYPAHLLILSAVCVSLLGA. A propeptide spanning residues 20 to 27 is cleaved from the precursor; that stretch reads ANIPPHPL. 6 cysteine pairs are disulfide-bonded: cysteine 54/cysteine 146, cysteine 56/cysteine 72, cysteine 71/cysteine 127, cysteine 78/cysteine 120, cysteine 88/cysteine 113, and cysteine 106/cysteine 118. Ca(2+) is bound by residues tyrosine 55, glycine 57, and glycine 59. Histidine 75 is an active-site residue. Residue aspartate 76 participates in Ca(2+) binding. Residue aspartate 121 is part of the active site.

The protein belongs to the phospholipase A2 family. Group I subfamily. D49 sub-subfamily. Heterodimer; disulfide-linked. The A chains have phospholipase A2 activity and the B chains show homology with the basic protease inhibitors. It depends on Ca(2+) as a cofactor. Expressed by the venom gland.

The protein localises to the secreted. The catalysed reaction is a 1,2-diacyl-sn-glycero-3-phosphocholine + H2O = a 1-acyl-sn-glycero-3-phosphocholine + a fatty acid + H(+). Its function is as follows. Snake venom phospholipase A2 (PLA2) that inhibits neuromuscular transmission by blocking acetylcholine release from the nerve termini. PLA2 catalyzes the calcium-dependent hydrolysis of the 2-acyl groups in 3-sn-phosphoglycerides. In Bungarus caeruleus (Indian krait), this protein is Basic phospholipase A2 beta-bungarotoxin A1 chain.